The following is a 739-amino-acid chain: Phosphoribosylformylglycinamidine synthase subunit PurL (739 aa).

Residue His53 is part of the active site. ATP-binding residues include Tyr56 and Lys95. Glu97 provides a ligand contact to Mg(2+). Substrate is bound by residues 98–101 (SHNH) and Arg120. His99 acts as the Proton acceptor in catalysis. Residue Asp121 participates in Mg(2+) binding. Gln244 contacts substrate. Asp274 contacts Mg(2+). 318–320 (ESQ) contributes to the substrate binding site. The ATP site is built by Asp501 and Gly538. Asn539 provides a ligand contact to Mg(2+). Residue Ser541 coordinates substrate.

The protein belongs to the FGAMS family. Monomer. Part of the FGAM synthase complex composed of 1 PurL, 1 PurQ and 2 PurS subunits.

It localises to the cytoplasm. It catalyses the reaction N(2)-formyl-N(1)-(5-phospho-beta-D-ribosyl)glycinamide + L-glutamine + ATP + H2O = 2-formamido-N(1)-(5-O-phospho-beta-D-ribosyl)acetamidine + L-glutamate + ADP + phosphate + H(+). It participates in purine metabolism; IMP biosynthesis via de novo pathway; 5-amino-1-(5-phospho-D-ribosyl)imidazole from N(2)-formyl-N(1)-(5-phospho-D-ribosyl)glycinamide: step 1/2. Its function is as follows. Part of the phosphoribosylformylglycinamidine synthase complex involved in the purines biosynthetic pathway. Catalyzes the ATP-dependent conversion of formylglycinamide ribonucleotide (FGAR) and glutamine to yield formylglycinamidine ribonucleotide (FGAM) and glutamate. The FGAM synthase complex is composed of three subunits. PurQ produces an ammonia molecule by converting glutamine to glutamate. PurL transfers the ammonia molecule to FGAR to form FGAM in an ATP-dependent manner. PurS interacts with PurQ and PurL and is thought to assist in the transfer of the ammonia molecule from PurQ to PurL. The polypeptide is Phosphoribosylformylglycinamidine synthase subunit PurL (Listeria monocytogenes serotype 4a (strain HCC23)).